A 413-amino-acid chain; its full sequence is Phosphopentomutase (413 aa).

Residues Asp11, Asp306, His311, Asp347, His348, and His359 each contribute to the Mn(2+) site.

The protein belongs to the phosphopentomutase family. It depends on Mn(2+) as a cofactor.

It is found in the cytoplasm. It carries out the reaction 2-deoxy-alpha-D-ribose 1-phosphate = 2-deoxy-D-ribose 5-phosphate. The catalysed reaction is alpha-D-ribose 1-phosphate = D-ribose 5-phosphate. The protein operates within carbohydrate degradation; 2-deoxy-D-ribose 1-phosphate degradation; D-glyceraldehyde 3-phosphate and acetaldehyde from 2-deoxy-alpha-D-ribose 1-phosphate: step 1/2. Its function is as follows. Isomerase that catalyzes the conversion of deoxy-ribose 1-phosphate (dRib-1-P) and ribose 1-phosphate (Rib-1-P) to deoxy-ribose 5-phosphate (dRib-5-P) and ribose 5-phosphate (Rib-5-P), respectively. The protein is Phosphopentomutase of Helicobacter pylori (strain J99 / ATCC 700824) (Campylobacter pylori J99).